Reading from the N-terminus, the 205-residue chain is Outer-membrane lipoprotein LolB (205 aa).

The N-terminal stretch at 1–17 (MFLRHCITFTLIALLAG) is a signal peptide. Cys-18 is lipidated: N-palmitoyl cysteine. Cys-18 carries the S-diacylglycerol cysteine lipid modification.

The protein belongs to the LolB family. In terms of assembly, monomer.

The protein localises to the cell outer membrane. Functionally, plays a critical role in the incorporation of lipoproteins in the outer membrane after they are released by the LolA protein. The chain is Outer-membrane lipoprotein LolB from Pseudomonas putida (strain W619).